Consider the following 513-residue polypeptide: CUGBP Elav-like family member 2 (513 aa).

RRM domains lie at 35–118 (IKMF…PADS), 127–207 (RKLF…FADT), and 428–506 (ANLF…LKRS).

The protein belongs to the CELF/BRUNOL family.

It localises to the nucleus. Its subcellular location is the cytoplasm. In terms of biological role, RNA-binding protein implicated in the regulation of several post-transcriptional events. May be involved in pre-mRNA alternative splicing, mRNA translation repression and stability. The chain is CUGBP Elav-like family member 2 (celf2) from Xenopus tropicalis (Western clawed frog).